Consider the following 154-residue polypeptide: UPF0547 protein C16orf87 homolog (154 aa).

Residues 43-119 are disordered; that stretch reads NAKHSEKSPP…KHEEEREKQE (77 aa). The segment covering 68–84 has biased composition (basic and acidic residues); it reads VRREKINSTVNKDLENR. Ser-91 carries the phosphoserine modification. A coiled-coil region spans residues 104–132; the sequence is KSSSAKKHEEEREKQEKEIDIYANLSDEK. The segment covering 109–119 has biased composition (basic and acidic residues); it reads KKHEEEREKQE.

This sequence belongs to the UPF0547 family.

This chain is UPF0547 protein C16orf87 homolog, found in Mus musculus (Mouse).